Reading from the N-terminus, the 383-residue chain is Interleukin-13 receptor subunit alpha-2 (383 aa).

Positions 1–21 (MAFVHIRCLCFILLCTITGYS) are cleaved as a signal peptide. Over 22–334 (LEIKVNPPQD…WEGYTGPDSK (313 aa)) the chain is Extracellular. Fibronectin type-III domains lie at 28–128 (PPQD…SDEG), 131–219 (ETKI…PIRS), and 234–332 (PPEF…TGPD). A disulfide bridge connects residues cysteine 59 and cysteine 107. N-linked (GlcNAc...) asparagine glycosylation occurs at asparagine 109. An intrachain disulfide couples cysteine 139 to cysteine 149. An N-linked (GlcNAc...) asparagine glycan is attached at asparagine 162. The cysteines at positions 178 and 191 are disulfide-linked. Asparagine 209 and asparagine 293 each carry an N-linked (GlcNAc...) asparagine glycan. Cysteine 263 and cysteine 310 are joined by a disulfide. The WSXWS motif motif lies at 316-320 (WSEWS). The chain crosses the membrane as a helical span at residues 335–355 (IIFIVPVCLFFIFLLLLLCLI). Over 356–383 (VEKEEPEPTLSLHVDLNKEVCAYEDTLC) the chain is Cytoplasmic.

Belongs to the type I cytokine receptor family. Type 5 subfamily. As to quaternary structure, interacts with IL4RA. Interacts with high affinity to interleukin-13 (IL13), but not to interleukin-4 (IL4). Post-translationally, cleaved by MMP8 leading to a soluble form that is also able to interact with IL13.

It localises to the cell membrane. Its subcellular location is the secreted. In terms of biological role, cell surface receptor that plays a role in the regulation of IL-13-mediated responses. Functions as a decoy receptor that inhibits IL-13- and IL-4-mediated signal transduction via the JAK-STAT pathway and thereby modulates immune responses and inflammation. Serves as a functional signaling receptor for IL-13 in an alternative pathway involving AP-1 ultimately leading to the production of TGFB1. In Mus musculus (Mouse), this protein is Interleukin-13 receptor subunit alpha-2 (Il13ra2).